The chain runs to 574 residues: Interleukin-1 receptor-like 2 (574 aa).

Residues 1–21 form the signal peptide; it reads MGVTSLLFCGVFFLLLLFVAA. Residues 22–338 lie on the Extracellular side of the membrane; it reads DTCEDIFMHN…ILIYPVPDFR (317 aa). Ig-like C2-type domains lie at 25–113, 132–215, and 225–321; these read EDIF…VNLT, PDVY…IRNY, and YGRR…TCHA. Residues Asn43, Asn55, and Asn111 are each glycosylated (N-linked (GlcNAc...) asparagine). Cysteines 44 and 97 form a disulfide. Cys149 and Cys199 form a disulfide bridge. N-linked (GlcNAc...) asparagine glycosylation is found at Asn231, Asn237, Asn253, Asn269, Asn290, and Asn302. Cys252 and Cys319 form a disulfide bridge. The helical transmembrane segment at 339–359 threads the bilayer; sequence AYLLGGLMAFLLLVVSVLFIY. Residues 360 to 574 are Cytoplasmic-facing; it reads NSFKIDIMLW…CNAATGLITP (215 aa). The 156-residue stretch at 384–539 folds into the TIR domain; it reads KLYDAYVLYP…KFWKKVRYHM (156 aa). Glu470 is a catalytic residue.

This sequence belongs to the interleukin-1 receptor family. Interacts with IL1RAP; the association is enhanced by IL36B indicative for an functional signaling complex and inhibited by IL36RN. In terms of tissue distribution, expressed in bone marrow-derived dendritic cells, splenic CD4(+) T-cells, bone marrow-derived macrophages and bone marrow-derived neutrophils.

Its subcellular location is the membrane. It catalyses the reaction NAD(+) + H2O = ADP-D-ribose + nicotinamide + H(+). Functionally, receptor for interleukin-36 (IL36A, IL36B and IL36G). After binding to interleukin-36 associates with the coreceptor IL1RAP to form the interleukin-36 receptor complex which mediates interleukin-36-dependent activation of NF-kappa-B, MAPK and other pathways. The IL-36 signaling system is thought to be present in epithelial barriers and to take part in local inflammatory response; it is similar to the IL-1 system. Seems to be involved in skin inflammatory response by induction of the IL-23/IL-17/IL-22 pathway. This is Interleukin-1 receptor-like 2 (Il1rl2) from Mus musculus (Mouse).